We begin with the raw amino-acid sequence, 228 residues long: Endonuclease V (228 aa).

Residues D43 and D109 each contribute to the Mg(2+) site.

Belongs to the endonuclease V family. Requires Mg(2+) as cofactor.

Its subcellular location is the cytoplasm. The catalysed reaction is Endonucleolytic cleavage at apurinic or apyrimidinic sites to products with a 5'-phosphate.. Functionally, DNA repair enzyme involved in the repair of deaminated bases. Selectively cleaves double-stranded DNA at the second phosphodiester bond 3' to a deoxyinosine leaving behind the intact lesion on the nicked DNA. This Dictyoglomus thermophilum (strain ATCC 35947 / DSM 3960 / H-6-12) protein is Endonuclease V.